Consider the following 415-residue polypeptide: Branched-chain-amino-acid aminotransferase, cytosolic (415 aa).

Residue lysine 244 is modified to N6-(pyridoxal phosphate)lysine.

It belongs to the class-IV pyridoxal-phosphate-dependent aminotransferase family. It depends on pyridoxal 5'-phosphate as a cofactor.

Its subcellular location is the cytoplasm. The enzyme catalyses L-leucine + 2-oxoglutarate = 4-methyl-2-oxopentanoate + L-glutamate. It catalyses the reaction L-isoleucine + 2-oxoglutarate = (S)-3-methyl-2-oxopentanoate + L-glutamate. The catalysed reaction is L-valine + 2-oxoglutarate = 3-methyl-2-oxobutanoate + L-glutamate. Catalyzes the first reaction in the catabolism of the essential branched chain amino acids leucine, isoleucine, and valine. The protein is Branched-chain-amino-acid aminotransferase, cytosolic (bcat-1) of Caenorhabditis elegans.